The chain runs to 410 residues: Phosphoserine phosphatase (410 aa).

The region spanning leucine 13–aspartate 91 is the ACT domain. The Nucleophile role is filled by aspartate 187. 2 residues coordinate Mg(2+): aspartate 187 and aspartate 189. Aspartate 189 (proton donor) is an active-site residue. Residues glutamate 196, arginine 232, serine 275–glycine 276, and lysine 320 each bind substrate. Mg(2+) is bound at residue aspartate 343. Asparagine 346 is a binding site for substrate.

This sequence belongs to the HAD-like hydrolase superfamily. SerB family. The cofactor is Mg(2+).

The catalysed reaction is O-phospho-L-serine + H2O = L-serine + phosphate. It catalyses the reaction O-phospho-D-serine + H2O = D-serine + phosphate. Its pathway is amino-acid biosynthesis; L-serine biosynthesis; L-serine from 3-phospho-D-glycerate: step 3/3. Functionally, catalyzes the dephosphorylation of phosphoserine (P-Ser) in vitro. Also catalyzes the dephosphorylation of phosphothreonine (P-Thr) in vitro. The chain is Phosphoserine phosphatase from Streptomyces coelicolor (strain ATCC BAA-471 / A3(2) / M145).